A 21-amino-acid polypeptide reads, in one-letter code: Nucleoside diphosphate kinase (21 aa).

His4 acts as the Pros-phosphohistidine intermediate in catalysis.

It belongs to the NDK family. In terms of assembly, homohexamer. Requires Mg(2+) as cofactor.

It localises to the cytoplasm. It catalyses the reaction a 2'-deoxyribonucleoside 5'-diphosphate + ATP = a 2'-deoxyribonucleoside 5'-triphosphate + ADP. It carries out the reaction a ribonucleoside 5'-diphosphate + ATP = a ribonucleoside 5'-triphosphate + ADP. In terms of biological role, major role in the synthesis of nucleoside triphosphates other than ATP. The ATP gamma phosphate is transferred to the NDP beta phosphate via a ping-pong mechanism, using a phosphorylated active-site intermediate. This Candida albicans (Yeast) protein is Nucleoside diphosphate kinase (NDK1).